A 294-amino-acid chain; its full sequence is ATP synthase gamma chain (294 aa).

The protein belongs to the ATPase gamma chain family. As to quaternary structure, F-type ATPases have 2 components, CF(1) - the catalytic core - and CF(0) - the membrane proton channel. CF(1) has five subunits: alpha(3), beta(3), gamma(1), delta(1), epsilon(1). CF(0) has three main subunits: a, b and c.

It localises to the cell inner membrane. Its function is as follows. Produces ATP from ADP in the presence of a proton gradient across the membrane. The gamma chain is believed to be important in regulating ATPase activity and the flow of protons through the CF(0) complex. The sequence is that of ATP synthase gamma chain from Rhizorhabdus wittichii (strain DSM 6014 / CCUG 31198 / JCM 15750 / NBRC 105917 / EY 4224 / RW1) (Sphingomonas wittichii).